Here is a 1219-residue protein sequence, read N- to C-terminus: Protein jagged-1 (1219 aa).

Positions 1-33 (MRSPRTRGRPGRPLSLLLALLCALRAKVCGASG) are cleaved as a signal peptide. Topologically, residues 34–1067 (QFELEILSMQ…QRRPLKNRTD (1034 aa)) are extracellular. An N-linked (GlcNAc...) asparagine glycan is attached at asparagine 143. The DSL domain occupies 185–229 (VTCDDHYYGFGCNKFCRPRDDFFGHYACDQNGNKTCMEGWMGPEC). Intrachain disulfides connect cysteine 187–cysteine 196 and cysteine 200–cysteine 212. Residues 199-207 (FCRPRDDFF) are important for interaction with NOTCH1. A glycan (N-linked (GlcNAc...) asparagine) is linked at asparagine 217. 40 cysteine pairs are disulfide-bonded: cysteine 220/cysteine 229, cysteine 234/cysteine 245, cysteine 238/cysteine 251, cysteine 253/cysteine 262, cysteine 265/cysteine 276, cysteine 271/cysteine 282, cysteine 284/cysteine 293, cysteine 300/cysteine 312, cysteine 306/cysteine 322, cysteine 324/cysteine 333, cysteine 340/cysteine 351, cysteine 345/cysteine 360, cysteine 362/cysteine 371, cysteine 378/cysteine 389, cysteine 383/cysteine 398, cysteine 400/cysteine 409, cysteine 416/cysteine 427, cysteine 421/cysteine 436, cysteine 438/cysteine 447, cysteine 454/cysteine 464, cysteine 458/cysteine 473, cysteine 475/cysteine 484, cysteine 491/cysteine 502, cysteine 496/cysteine 511, cysteine 513/cysteine 522, cysteine 529/cysteine 540, cysteine 534/cysteine 549, cysteine 551/cysteine 560, cysteine 578/cysteine 605, cysteine 599/cysteine 615, cysteine 617/cysteine 626, cysteine 633/cysteine 644, cysteine 638/cysteine 653, cysteine 655/cysteine 664, cysteine 671/cysteine 682, cysteine 676/cysteine 691, cysteine 693/cysteine 702, cysteine 709/cysteine 720, cysteine 714/cysteine 729, and cysteine 731/cysteine 740. Residues 230 to 263 (NKAICRQGCSPKHGSCKLPGDCRCQYGWQGLYCD) form the EGF-like 1 domain. The 31-residue stretch at 264-294 (KCIPHPGCVHGTCNEPWQCLCETNWGGQLCD) folds into the EGF-like 2; atypical domain. 2 consecutive EGF-like domains span residues 296-334 (DLNY…PNCE) and 336-372 (AEHA…PTCS). In terms of domain architecture, EGF-like 5; calcium-binding spans 374-410 (NIDDCSPNNCSHGGTCQDLVNGFKCVCPPQWTGKTCQ). The N-linked (GlcNAc...) asparagine glycan is linked to asparagine 382. The EGF-like 6; calcium-binding domain occupies 412–448 (DANECEAKPCVNARSCKNLIASYYCDCLPGWMGQNCD). An EGF-like 7; calcium-binding domain is found at 450 to 485 (NINDCLGQCQNDASCRDLVNGYRCICPPGYAGDHCE). One can recognise an EGF-like 8; calcium-binding domain in the interval 487-523 (DIDECASNPCLNGGHCQNEINRFQCLCPTGFSGNLCQ). 2 EGF-like domains span residues 525 to 561 (DIDY…KNCS) and 586 to 627 (DTPE…TYCH). Residue asparagine 559 is glycosylated (N-linked (GlcNAc...) asparagine). The region spanning 629–665 (NINDCEGNPCTNGGTCIDGVNSYKCICSDGWEGAHCE) is the EGF-like 11; calcium-binding domain. The EGF-like 12; calcium-binding domain maps to 667-703 (NINDCSQNPCHYGGTCRDLVNDFYCDCKNGWKGKTCH). EGF-like domains follow at residues 705–741 (RDSQ…TTCN) and 744–780 (RNSS…PICT). Asparagine 745 carries N-linked (GlcNAc...) asparagine glycosylation. 11 disulfides stabilise this stretch: cysteine 748–cysteine 759, cysteine 753–cysteine 768, cysteine 770–cysteine 779, cysteine 786–cysteine 797, cysteine 791–cysteine 806, cysteine 808–cysteine 817, cysteine 824–cysteine 835, cysteine 829–cysteine 844, cysteine 846–cysteine 855, cysteine 925–cysteine 936, and cysteine 948–cysteine 958. The EGF-like 15; calcium-binding domain occupies 782 to 818 (NTNDCSPHPCYNSGTCVDGDNWYRCECAPGFAGPDCR). Positions 820–856 (NINECQSSPCAFGATCVDEINGYQCICPPGHSGAKCH) constitute an EGF-like 16; calcium-binding domain. Asparagine 960, asparagine 991, asparagine 1045, and asparagine 1064 each carry an N-linked (GlcNAc...) asparagine glycan. Residues 1068–1093 (FLVPLLSSVLTVAWVCCLVTAFYWCV) traverse the membrane as a helical segment. Over 1094–1219 (RKRRRKPSSH…QSLNRMEYIV (126 aa)) the chain is Cytoplasmic. The segment at 1182-1219 (REEKVPQRTPTKHPNWTNKQDNRDLESAQSLNRMEYIV) is disordered. Residues 1189-1200 (RTPTKHPNWTNK) are compositionally biased toward polar residues.

As to quaternary structure, interacts with NOTCH1. Interacts with NOTCH2 and NOTCH3. Widely expressed in a variety of tissues.

It is found in the membrane. The protein resides in the cell membrane. Ligand for multiple Notch receptors and involved in the mediation of Notch signaling. May be involved in cell-fate decisions during hematopoiesis. Enhances fibroblast growth factor-induced angiogenesis (in vitro). Seems to be involved in early and late stages of mammalian cardiovascular development. Inhibits myoblast differentiation. May regulate fibroblast growth factor-induced angiogenesis. This is Protein jagged-1 (Jag1) from Rattus norvegicus (Rat).